The following is a 440-amino-acid chain: Chromosomal replication initiator protein DnaA (440 aa).

Residues 1–93 (MNVQLNEIWN…QTPVKPVAQE (93 aa)) are domain I, interacts with DnaA modulators. The interval 94–101 (YTEDSNMS) is domain II. The interval 102 to 318 (FLNPKYTFDT…GALNRVIAYS (217 aa)) is domain III, AAA+ region. Residues G146, G148, K149, and T150 each contribute to the ATP site. Residues 319–440 (TLTENIINVD…EEIKKNITGG (122 aa)) are domain IV, binds dsDNA.

It belongs to the DnaA family. In terms of assembly, oligomerizes as a right-handed, spiral filament on DNA at oriC.

The protein localises to the cytoplasm. Its function is as follows. Plays an essential role in the initiation and regulation of chromosomal replication. ATP-DnaA binds to the origin of replication (oriC) to initiate formation of the DNA replication initiation complex once per cell cycle. Binds the DnaA box (a 9 base pair repeat at the origin) and separates the double-stranded (ds)DNA. Forms a right-handed helical filament on oriC DNA; dsDNA binds to the exterior of the filament while single-stranded (ss)DNA is stabiized in the filament's interior. The ATP-DnaA-oriC complex binds and stabilizes one strand of the AT-rich DNA unwinding element (DUE), permitting loading of DNA polymerase. After initiation quickly degrades to an ADP-DnaA complex that is not apt for DNA replication. Binds acidic phospholipids. This Ruminiclostridium cellulolyticum (strain ATCC 35319 / DSM 5812 / JCM 6584 / H10) (Clostridium cellulolyticum) protein is Chromosomal replication initiator protein DnaA.